The primary structure comprises 238 residues: ATP-dependent dethiobiotin synthetase BioD (238 aa).

12 to 17 (EVGKTV) is a binding site for ATP. Thr-16 is a Mg(2+) binding site. Residue Lys-37 is part of the active site. Substrate is bound at residue Thr-41. ATP contacts are provided by residues Asp-50, 109–112 (EGAG), 170–171 (GS), and 200–202 (PAG). Mg(2+)-binding residues include Asp-50 and Glu-109.

Belongs to the dethiobiotin synthetase family. In terms of assembly, homodimer. Mg(2+) is required as a cofactor.

Its subcellular location is the cytoplasm. The catalysed reaction is (7R,8S)-7,8-diammoniononanoate + CO2 + ATP = (4R,5S)-dethiobiotin + ADP + phosphate + 3 H(+). Its pathway is cofactor biosynthesis; biotin biosynthesis; biotin from 7,8-diaminononanoate: step 1/2. In terms of biological role, catalyzes a mechanistically unusual reaction, the ATP-dependent insertion of CO2 between the N7 and N8 nitrogen atoms of 7,8-diaminopelargonic acid (DAPA, also called 7,8-diammoniononanoate) to form a ureido ring. In Streptomyces coelicolor (strain ATCC BAA-471 / A3(2) / M145), this protein is ATP-dependent dethiobiotin synthetase BioD.